Reading from the N-terminus, the 466-residue chain is 3-isopropylmalate dehydratase large subunit (466 aa).

[4Fe-4S] cluster contacts are provided by C347, C407, and C410.

This sequence belongs to the aconitase/IPM isomerase family. LeuC type 1 subfamily. Heterodimer of LeuC and LeuD. Requires [4Fe-4S] cluster as cofactor.

The enzyme catalyses (2R,3S)-3-isopropylmalate = (2S)-2-isopropylmalate. It functions in the pathway amino-acid biosynthesis; L-leucine biosynthesis; L-leucine from 3-methyl-2-oxobutanoate: step 2/4. Functionally, catalyzes the isomerization between 2-isopropylmalate and 3-isopropylmalate, via the formation of 2-isopropylmaleate. The chain is 3-isopropylmalate dehydratase large subunit from Escherichia coli O45:K1 (strain S88 / ExPEC).